We begin with the raw amino-acid sequence, 105 residues long: Large ribosomal subunit protein uL24 (105 aa).

Belongs to the universal ribosomal protein uL24 family. In terms of assembly, part of the 50S ribosomal subunit.

One of two assembly initiator proteins, it binds directly to the 5'-end of the 23S rRNA, where it nucleates assembly of the 50S subunit. Functionally, one of the proteins that surrounds the polypeptide exit tunnel on the outside of the subunit. The polypeptide is Large ribosomal subunit protein uL24 (Xanthomonas axonopodis pv. citri (strain 306)).